The primary structure comprises 422 residues: Histidinol dehydrogenase (422 aa).

The NAD(+) site is built by Tyr-123, Gln-183, and Asn-206. Positions 229, 251, and 254 each coordinate substrate. Zn(2+) is bound by residues Gln-251 and His-254. Catalysis depends on proton acceptor residues Glu-320 and His-321. His-321, Asp-354, Glu-408, and His-413 together coordinate substrate. Residue Asp-354 participates in Zn(2+) binding. His-413 is a Zn(2+) binding site.

It belongs to the histidinol dehydrogenase family. Requires Zn(2+) as cofactor.

The enzyme catalyses L-histidinol + 2 NAD(+) + H2O = L-histidine + 2 NADH + 3 H(+). The protein operates within amino-acid biosynthesis; L-histidine biosynthesis; L-histidine from 5-phospho-alpha-D-ribose 1-diphosphate: step 9/9. Catalyzes the sequential NAD-dependent oxidations of L-histidinol to L-histidinaldehyde and then to L-histidine. The sequence is that of Histidinol dehydrogenase from Haloarcula marismortui (strain ATCC 43049 / DSM 3752 / JCM 8966 / VKM B-1809) (Halobacterium marismortui).